The sequence spans 875 residues: Translation initiation factor IF-2 (875 aa).

2 disordered regions span residues Glu123–Lys204 and Glu240–Thr278. Residues Glu240–Arg252 are compositionally biased toward basic and acidic residues. The span at Pro259 to Lys268 shows a compositional bias: basic residues. Residues Lys269–Thr278 show a composition bias toward basic and acidic residues. Positions Glu379 to Glu547 constitute a tr-type G domain. The tract at residues Gly388–Thr395 is G1. Gly388–Thr395 contacts GTP. The interval Gly413–His417 is G2. The segment at Asp435–Gly438 is G3. GTP contacts are provided by residues Asp435–His439 and Asn489–Asp492. Residues Asn489–Asp492 form a G4 region. Positions Ser525–Lys527 are G5.

This sequence belongs to the TRAFAC class translation factor GTPase superfamily. Classic translation factor GTPase family. IF-2 subfamily.

The protein resides in the cytoplasm. Its function is as follows. One of the essential components for the initiation of protein synthesis. Protects formylmethionyl-tRNA from spontaneous hydrolysis and promotes its binding to the 30S ribosomal subunits. Also involved in the hydrolysis of GTP during the formation of the 70S ribosomal complex. The polypeptide is Translation initiation factor IF-2 (Persephonella marina (strain DSM 14350 / EX-H1)).